The following is a 145-amino-acid chain: UPF0179 protein MmarC6_0993 (145 aa).

The protein belongs to the UPF0179 family.

The protein is UPF0179 protein MmarC6_0993 of Methanococcus maripaludis (strain C6 / ATCC BAA-1332).